We begin with the raw amino-acid sequence, 372 residues long: NAD(P)H-quinone oxidoreductase subunit 1 (372 aa).

Transmembrane regions (helical) follow at residues 27 to 47 (IIWL…GVLV), 97 to 117 (ILFT…WLIV), 128 to 148 (VGIG…GLLM), 176 to 196 (LALS…IDIV), 204 to 224 (ILSW…ICAL), 266 to 286 (ILSA…PIPV), 308 to 328 (SIGI…AILL), and 347 to 367 (FLLP…LAFP).

The protein belongs to the complex I subunit 1 family. As to quaternary structure, NDH-1 is composed of at least 11 different subunits.

The protein resides in the cellular thylakoid membrane. The enzyme catalyses a plastoquinone + NADH + (n+1) H(+)(in) = a plastoquinol + NAD(+) + n H(+)(out). The catalysed reaction is a plastoquinone + NADPH + (n+1) H(+)(in) = a plastoquinol + NADP(+) + n H(+)(out). NDH-1 shuttles electrons from an unknown electron donor, via FMN and iron-sulfur (Fe-S) centers, to quinones in the respiratory and/or the photosynthetic chain. The immediate electron acceptor for the enzyme in this species is believed to be plastoquinone. Couples the redox reaction to proton translocation, and thus conserves the redox energy in a proton gradient. The protein is NAD(P)H-quinone oxidoreductase subunit 1 of Prochlorococcus marinus (strain MIT 9215).